A 145-amino-acid chain; its full sequence is Ribosome-binding factor A (145 aa).

Basic and acidic residues predominate over residues 122–132; that stretch reads KVQRDLESAPR. The segment at 122–145 is disordered; it reads KVQRDLESAPREDDEGEPDSSSRD.

Belongs to the RbfA family. In terms of assembly, monomer. Binds 30S ribosomal subunits, but not 50S ribosomal subunits or 70S ribosomes.

Its subcellular location is the cytoplasm. In terms of biological role, one of several proteins that assist in the late maturation steps of the functional core of the 30S ribosomal subunit. Associates with free 30S ribosomal subunits (but not with 30S subunits that are part of 70S ribosomes or polysomes). Required for efficient processing of 16S rRNA. May interact with the 5'-terminal helix region of 16S rRNA. This Methylorubrum extorquens (strain PA1) (Methylobacterium extorquens) protein is Ribosome-binding factor A.